Consider the following 995-residue polypeptide: Endosome/lysosome-associated apoptosis and autophagy regulator family member 2 (995 aa).

Residues 1–21 (MGVFCWSGCLVISLQLLLGAA) form the signal peptide. Over 22–895 (LDNLSTCKEE…ACESIDFWLK (874 aa)) the chain is Extracellular. N-linked (GlcNAc...) asparagine glycosylation is found at asparagine 24, asparagine 136, asparagine 245, asparagine 372, asparagine 527, asparagine 649, asparagine 683, asparagine 700, and asparagine 758. Residues 639–843 (SECLVTYTNE…LWETAEACPL (205 aa)) form the MRH domain. 2 disulfide bridges follow: cysteine 641–cysteine 687 and cysteine 697–cysteine 725. 2 cysteine pairs are disulfide-bonded: cysteine 793/cysteine 829 and cysteine 805/cysteine 841. An N-linked (GlcNAc...) asparagine glycan is attached at asparagine 883. Residues 896–916 (VGAGVGAFTAVLLIALTCYFW) traverse the membrane as a helical segment. The Cytoplasmic segment spans residues 917–995 (KKNQKLEYKY…QLKSSRAQNI (79 aa)).

Belongs to the ELAPOR family. In terms of tissue distribution, expressed in the animal half of the embryo during gastrulation, becoming restricted to the ventral ectoderm at stage 12.5. At the neurula stage, expressed in the anterior ectoderm surrounding the neural plate, and weakly in the epidermis. Expression is especially high in the presumptive hatching gland and cement gland regions. Surprisingly, by the tailbud stage (stage 22), expression is limited to the hatching gland and is not seen in the cement gland. Conversely, in tadpoles expressed broadly in the head, heart and fin. Expression in the head is seen in the primary mouth and in the brain, eyes, otic vesicles and olfactory pits.

It is found in the cell membrane. Functions as a regulator of the BMP signaling pathway and is involved in epidermal differentiation. The sequence is that of Endosome/lysosome-associated apoptosis and autophagy regulator family member 2 (elapor2) from Xenopus laevis (African clawed frog).